The sequence spans 428 residues: Trigger factor (428 aa).

Positions 163–248 constitute a PPIase FKBP-type domain; the sequence is GDTAVIDFEG…VHEVKAKQLP (86 aa).

Belongs to the FKBP-type PPIase family. Tig subfamily.

The protein localises to the cytoplasm. It carries out the reaction [protein]-peptidylproline (omega=180) = [protein]-peptidylproline (omega=0). Involved in protein export. Acts as a chaperone by maintaining the newly synthesized protein in an open conformation. Functions as a peptidyl-prolyl cis-trans isomerase. The protein is Trigger factor of Geobacillus thermodenitrificans (strain NG80-2).